Here is a 187-residue protein sequence, read N- to C-terminus: Photosystem I assembly protein Ycf4 (187 aa).

A run of 2 helical transmembrane segments spans residues 25–47 (YWWA…SSYL) and 62–84 (FVPQ…IYLW).

The protein belongs to the Ycf4 family.

It is found in the plastid. The protein resides in the chloroplast thylakoid membrane. Functionally, seems to be required for the assembly of the photosystem I complex. The polypeptide is Photosystem I assembly protein Ycf4 (Mesostigma viride (Green alga)).